The sequence spans 425 residues: DNA-directed RNA polymerase I subunit rpa49 (425 aa).

A disordered region spans residues 1–26 (MAGDELKGKKRKYRDSHSGDEKSVKI). Basic and acidic residues predominate over residues 15 to 24 (DSHSGDEKSV).

The protein belongs to the eukaryotic RPA49/POLR1E RNA polymerase subunit family. In terms of assembly, component of the RNA polymerase I (Pol I) complex consisting of 14 subunits.

It is found in the nucleus. Its subcellular location is the nucleolus. Its function is as follows. DNA-dependent RNA polymerase catalyzes the transcription of DNA into RNA using the four ribonucleoside triphosphates as substrates. Component of RNA polymerase I which synthesizes ribosomal RNA precursors. The protein is DNA-directed RNA polymerase I subunit rpa49 (rpa49) of Schizosaccharomyces pombe (strain 972 / ATCC 24843) (Fission yeast).